Reading from the N-terminus, the 137-residue chain is Large ribosomal subunit protein uL16 (137 aa).

Belongs to the universal ribosomal protein uL16 family. In terms of assembly, part of the 50S ribosomal subunit.

Binds 23S rRNA and is also seen to make contacts with the A and possibly P site tRNAs. The sequence is that of Large ribosomal subunit protein uL16 from Brucella abortus (strain S19).